We begin with the raw amino-acid sequence, 138 residues long: ATP synthase epsilon chain (138 aa).

This sequence belongs to the ATPase epsilon chain family. F-type ATPases have 2 components, CF(1) - the catalytic core - and CF(0) - the membrane proton channel. CF(1) has five subunits: alpha(3), beta(3), gamma(1), delta(1), epsilon(1). CF(0) has three main subunits: a, b and c.

Its subcellular location is the cell inner membrane. Produces ATP from ADP in the presence of a proton gradient across the membrane. The protein is ATP synthase epsilon chain of Polynucleobacter necessarius subsp. necessarius (strain STIR1).